The primary structure comprises 199 residues: Recombination protein RecR (199 aa).

Residues 58 to 73 (CKKCFNLTSEDECEIC) form a C4-type zinc finger. The region spanning 81–175 (KLICVVSETK…KVTRIAYGLP (95 aa)) is the Toprim domain.

The protein belongs to the RecR family.

Functionally, may play a role in DNA repair. It seems to be involved in an RecBC-independent recombinational process of DNA repair. It may act with RecF and RecO. This Prochlorococcus marinus (strain AS9601) protein is Recombination protein RecR.